We begin with the raw amino-acid sequence, 1784 residues long: Histone acetyltransferase KAT6B (1784 aa).

In terms of domain architecture, SAMD1-like winged helix (WH) spans 1–77; sequence MVKLANPLYT…LASYKDPDNP (77 aa). The disordered stretch occupies residues 72-98; that stretch reads KDPDNPGRFSSVKPGTFPKSTKESRGS. Residues 103 to 176 enclose the H15 domain; the sequence is RNVDWNKLLR…KDGPQYRVNY (74 aa). 2 consecutive PHD-type zinc fingers follow at residues 213–272 and 269–320; these read IPIC…CKTC and CKTC…CRPK. Serine 355 carries the post-translational modification Phosphoserine. Positions 361–425 are negatively regulates HAT activity; the sequence is GSMNAFTGRG…ECESGVEDCG (65 aa). Lysine 381 participates in a covalent cross-link: Glycyl lysine isopeptide (Lys-Gly) (interchain with G-Cter in SUMO2). Residues 423–697 form the MYST-type HAT domain; sequence DCGRYPSVIE…LDPDSLRWTP (275 aa). Positions 426-716 are catalytic; sequence RYPSVIEFGK…EEEREAEKEA (291 aa). The C2HC MYST-type zinc-finger motif lies at 456–481; the sequence is LYLCEFCLKYMKSKNILLRHSKKCGW. The tract at residues 460–716 is interaction with BRPF1; sequence EFCLKYMKSK…EEEREAEKEA (257 aa). Lysine 523 is modified (N6-acetyllysine; by autocatalysis). Acetyl-CoA contacts are provided by residues 564–568 and 573–579; these read SCIMI and QRQGFGR. Glutamate 599 (proton donor/acceptor) is an active-site residue. Serine 603 provides a ligand contact to acetyl-CoA. Disordered stretches follow at residues 730 to 884, 904 to 1163, 1195 to 1273, and 1291 to 1330; these read EQEV…RPMP, RKAF…FKEV, SCNS…FQDC, and QSPQIATTLDDCQQSDHSSPVSSVHSHPGQSVRSVNSPSV. Positions 733–751 are enriched in polar residues; sequence VLSTRANSRQSPAKVQSKN. Lysine 746, lysine 750, and lysine 752 each carry N6-acetyllysine. Phosphoserine is present on serine 756. A compositionally biased stretch (acidic residues) spans 777–819; the sequence is SEEEEEEEEDEEEEDEEEEEEEEEDEEEEEEEEEEEEEEEEEN. A compositionally biased stretch (polar residues) spans 820 to 831; the sequence is IQSSPPRLTKPQ. Residues 835 to 854 show a composition bias toward basic residues; sequence IKRKRPFVLKKKRGRKRRRI. Residues 856-869 show a composition bias toward low complexity; that stretch reads SSVTTETISETTEV. The span at 904-914 shows a compositional bias: basic residues; that stretch reads RKAFQHQPGKK. Basic and acidic residues-rich tracts occupy residues 938–957 and 1055–1064; these read MNDDSRNLKEGSKDNPEPLK and EKPEDDLIKP. Residues 1065–1087 show a composition bias toward acidic residues; sequence EEEEEEEEEEEEEEGEEEEEEGG. Basic and acidic residues-rich tracts occupy residues 1088 to 1101 and 1107 to 1118; these read NVEKDPDGAKSQEK and SPEKEDSARLDD. The segment covering 1119–1128 has biased composition (acidic residues); sequence HEEEEEEDEE. Positions 1144–1163 are enriched in basic and acidic residues; sequence HMESAEVEKEELPRESFKEV. A compositionally biased stretch (acidic residues) spans 1209-1218; that stretch reads AVPESDEEPP. Basic and acidic residues predominate over residues 1224–1240; the sequence is QKQDQKNSKEVDTEFKE. Composition is skewed to polar residues over residues 1251–1263 and 1291–1302; these read ETVQAVQSLTQES and QSPQIATTLDDC. Residues 1271–1784 form an interaction with RUNX1 and RUNX2 region; that stretch reads QDCAETQEAC…QSLNGSYMRR (514 aa). Residues 1305–1322 show a composition bias toward low complexity; it reads SDHSSPVSSVHSHPGQSV.

The protein belongs to the MYST (SAS/MOZ) family. Component of the MOZ/MORF complex composed at least of ING5, KAT6A, KAT6B, MEAF6 and one of BRPF1, BRD1/BRPF2 and BRPF3. Interacts with RUNX1 and RUNX2. Autoacetylation at Lys-523 is required for proper function.

The protein localises to the nucleus. The catalysed reaction is L-lysyl-[protein] + acetyl-CoA = N(6)-acetyl-L-lysyl-[protein] + CoA + H(+). Its function is as follows. Histone acetyltransferase which may be involved in both positive and negative regulation of transcription. Required for RUNX2-dependent transcriptional activation. May be involved in cerebral cortex development. Component of the MOZ/MORF complex which has a histone H3 acetyltransferase activity. The chain is Histone acetyltransferase KAT6B (KAT6B) from Macaca fascicularis (Crab-eating macaque).